Here is an 82-residue protein sequence, read N- to C-terminus: Cell division topological specificity factor (82 aa).

The protein belongs to the MinE family.

Its function is as follows. Prevents the cell division inhibition by proteins MinC and MinD at internal division sites while permitting inhibition at polar sites. This ensures cell division at the proper site by restricting the formation of a division septum at the midpoint of the long axis of the cell. The polypeptide is Cell division topological specificity factor (Hahella chejuensis (strain KCTC 2396)).